Reading from the N-terminus, the 432-residue chain is Adenylosuccinate synthetase 2 (432 aa).

GTP-binding positions include 13 to 19 (GDEGKGK) and 41 to 43 (GHT). Catalysis depends on Asp14, which acts as the Proton acceptor. 2 residues coordinate Mg(2+): Asp14 and Gly41. Residues 14 to 17 (DEGK), 39 to 42 (NAGH), Thr130, Arg144, Gln225, Thr240, and Arg304 contribute to the IMP site. His42 serves as the catalytic Proton donor. Residue 300-306 (ATTGRSR) participates in substrate binding. GTP-binding positions include Arg306, 332–334 (KLD), and 415–417 (STG).

Belongs to the adenylosuccinate synthetase family. As to quaternary structure, homodimer. Mg(2+) is required as a cofactor.

Its subcellular location is the cytoplasm. It carries out the reaction IMP + L-aspartate + GTP = N(6)-(1,2-dicarboxyethyl)-AMP + GDP + phosphate + 2 H(+). The protein operates within purine metabolism; AMP biosynthesis via de novo pathway; AMP from IMP: step 1/2. Its function is as follows. Plays an important role in the de novo pathway of purine nucleotide biosynthesis. Catalyzes the first committed step in the biosynthesis of AMP from IMP. The polypeptide is Adenylosuccinate synthetase 2 (Photorhabdus laumondii subsp. laumondii (strain DSM 15139 / CIP 105565 / TT01) (Photorhabdus luminescens subsp. laumondii)).